The primary structure comprises 669 residues: DNA ligase (669 aa).

NAD(+) is bound by residues 34 to 38, 83 to 84, and Glu114; these read DAEYD and SL. The active-site N6-AMP-lysine intermediate is Lys116. NAD(+) is bound by residues Arg137, Glu171, Lys287, and Lys311. Zn(2+)-binding residues include Cys405, Cys408, Cys423, and Cys428. The region spanning 591–669 is the BRCT domain; sequence NVESYFAGKT…EERFLQELNK (79 aa).

The protein belongs to the NAD-dependent DNA ligase family. LigA subfamily. The cofactor is Mg(2+). It depends on Mn(2+) as a cofactor.

It catalyses the reaction NAD(+) + (deoxyribonucleotide)n-3'-hydroxyl + 5'-phospho-(deoxyribonucleotide)m = (deoxyribonucleotide)n+m + AMP + beta-nicotinamide D-nucleotide.. Functionally, DNA ligase that catalyzes the formation of phosphodiester linkages between 5'-phosphoryl and 3'-hydroxyl groups in double-stranded DNA using NAD as a coenzyme and as the energy source for the reaction. It is essential for DNA replication and repair of damaged DNA. The chain is DNA ligase from Bacillus cereus (strain ATCC 10987 / NRS 248).